The following is a 189-amino-acid chain: Probable nicotinate-nucleotide adenylyltransferase (189 aa).

Belongs to the NadD family.

It carries out the reaction nicotinate beta-D-ribonucleotide + ATP + H(+) = deamido-NAD(+) + diphosphate. The protein operates within cofactor biosynthesis; NAD(+) biosynthesis; deamido-NAD(+) from nicotinate D-ribonucleotide: step 1/1. In terms of biological role, catalyzes the reversible adenylation of nicotinate mononucleotide (NaMN) to nicotinic acid adenine dinucleotide (NaAD). In Bacillus cereus (strain Q1), this protein is Probable nicotinate-nucleotide adenylyltransferase.